Reading from the N-terminus, the 268-residue chain is Energy-coupling factor transporter transmembrane protein EcfT (268 aa).

The next 5 helical transmembrane spans lie at 26–46, 72–92, 106–126, 149–169, and 247–267; these read IVTFVYIIVMLWASNWQTYAW, IFWLILFTVILQLLFTPGTPI, ILNAIYVMVRFVLIILMSTIL, IGVPVAELALMLAIALRFVPL, and VAFAALIGFVIIFFVIKTWLH.

The protein belongs to the energy-coupling factor EcfT family. In terms of assembly, forms a stable energy-coupling factor (ECF) transporter complex composed of 2 membrane-embedded substrate-binding proteins (S component), 2 ATP-binding proteins (A component) and 2 transmembrane proteins (T component). May be able to interact with more than 1 S component at a time.

Its subcellular location is the cell membrane. Transmembrane (T) component of an energy-coupling factor (ECF) ABC-transporter complex. Unlike classic ABC transporters this ECF transporter provides the energy necessary to transport a number of different substrates. This chain is Energy-coupling factor transporter transmembrane protein EcfT, found in Leuconostoc gelidum subsp. gasicomitatum (strain DSM 15947 / CCUG 46042 / CECT 5767 / JCM 12535 / LMG 18811 / NBRC 113245 / TB1-10) (Leuconostoc gasicomitatum).